We begin with the raw amino-acid sequence, 420 residues long: Dachshund homolog dac-1 (420 aa).

A disordered region spans residues 23-77 (PSSSSSSSNNSSSNTSSSNFLSPYEYQESSTSPRDTTDSSGESSLSSSGSSSSLN). Composition is skewed to low complexity over residues 24-41 (SSSS…SSSN) and 51-77 (SSTS…SSLN). The segment at 85-171 (KLIKFRGHNV…LLKTSDFEKL (87 aa)) is DACHbox-N. Over residues 242–258 (NSFERADDDDQNQRDAD) the composition is skewed to basic and acidic residues. Positions 242–321 (NSFERADDDD…SSSSSGKNDE (80 aa)) are disordered. Over residues 263-273 (LNLSKSGGNSE) the composition is skewed to polar residues. A compositionally biased stretch (low complexity) spans 297 to 317 (GGSNSNSLSMSMEAGSSSSSG).

Belongs to the DACH/dachshund family. As to expression, expressed in AFD, AWC, ASE and ASK neurons. Expressed in the alae.

Its subcellular location is the nucleus. In terms of biological role, transcription factor. Plays a role in the thermotactic response. In Caenorhabditis elegans, this protein is Dachshund homolog dac-1.